Here is an 80-residue protein sequence, read N- to C-terminus: MAKFASIIVLLFVALVVFAAFEEPTMVEAQKLCQRPSGTWSGVCGNNNACKNQCIRLEKARHGSCNYVFPAHKCICYFPC.

A signal peptide spans 1–29 (MAKFASIIVLLFVALVVFAAFEEPTMVEA). Position 30 is a pyrrolidone carboxylic acid (Gln30). 4 disulfide bridges follow: Cys33/Cys80, Cys44/Cys65, Cys50/Cys74, and Cys54/Cys76.

Belongs to the DEFL family.

The protein localises to the secreted. Its function is as follows. Possesses antifungal activity sensitive to inorganic cations. Induces potential changes in fungal membranes and increased K(+) efflux and Ca(2+) uptake. This Raphanus sativus (Radish) protein is Defensin-like protein 2 (AFP2).